We begin with the raw amino-acid sequence, 610 residues long: Anthocyanin regulatory Lc protein (610 aa).

Disordered stretches follow at residues 402 to 422 and 468 to 524; these read ATGA…MSER and LESS…PVLT. Residues 412-461 form the bHLH domain; sequence TGTKNHVMSERKRREKLNEMFLVLKSLLPSIHRVNKASILAETIAYLKEL. A compositionally biased stretch (polar residues) spans 481–495; sequence TTTRLITRPSRGNNE. Basic and acidic residues predominate over residues 508–519; that stretch reads KSPELGRDDVER.

This sequence belongs to the bHLH protein family. Efficient DNA binding requires dimerization with another bHLH protein.

Its subcellular location is the nucleus. Putative transcriptional activator. Controls tissue-specific synthesis of anthocyanin pigments in various parts of the maize plant. In Zea mays (Maize), this protein is Anthocyanin regulatory Lc protein (LC).